Here is a 959-residue protein sequence, read N- to C-terminus: AP2-associated protein kinase 1 (959 aa).

Residue methionine 1 is modified to N-acetylmethionine. Residues 1-11 (MKKFFDSRREQ) are compositionally biased toward basic and acidic residues. Residues 1–27 (MKKFFDSRREQGSSGLGSGSSGGGGSS) are disordered. Serine 14 carries the post-translational modification Phosphoserine. Gly residues predominate over residues 14 to 27 (SGLGSGSSGGGGSS). The Protein kinase domain maps to 46-315 (VTVDEVLAEG…QVSYFSFKLL (270 aa)). ATP-binding positions include 52-60 (LAEGGFALV) and lysine 74. The active-site Proton acceptor is aspartate 176. Tyrosine 234 is modified (phosphotyrosine). Serine 235 carries the post-translational modification Phosphoserine. The segment at 340-385 (SEAAVKKTQPKARLTDPIPTTETSIAPRQRPKAGQTQPNPGILPIQ) is disordered. 2 positions are modified to phosphothreonine: threonine 354 and threonine 389. Position 391 is an omega-N-methylarginine (arginine 391). Disordered stretches follow at residues 398–514 (PLPQ…AVHP) and 578–630 (TAPQ…RAGH). The segment covering 404–419 (GPSNQPGLLPSVSQPK) has biased composition (polar residues). The span at 420–435 (AQATPSQPLQSSQPKQ) shows a compositional bias: low complexity. Threonine 441 carries the post-translational modification Phosphothreonine. Composition is skewed to low complexity over residues 444 to 481 (QTPA…QPQQ), 494 to 510 (QQQQ…QQFQ), and 578 to 603 (TAPQ…KVQT). A Phosphothreonine modification is found at threonine 604. A compositionally biased stretch (polar residues) spans 609 to 625 (IQGQKVGSLTPPSSPKT). Serine 616 is modified (phosphoserine). Residue threonine 618 is modified to Phosphothreonine. Serine 621, serine 622, serine 635, and serine 648 each carry phosphoserine. Threonine 651 is subject to Phosphothreonine. 4 disordered regions span residues 662-699 (SLNK…FDDD), 727-763 (GGSA…GGQA), 837-857 (PVAQ…TDSL), and 923-943 (ITKN…ESSL). A compositionally biased stretch (polar residues) spans 670–694 (TTTPSGSPRTSQQNVSNASEGSTWN). At serine 729 the chain carries Phosphoserine. Composition is skewed to polar residues over residues 738–752 (QPTQ…SFSA) and 842–857 (LPSQ…TDSL). The tract at residues 821–958 (DKADVAVESL…SLLLVDQLID (138 aa)) is clathrin-binding domain (CBD). A phosphoserine mark is found at serine 844, serine 935, and serine 936. Low complexity predominate over residues 929 to 942 (GGHSRNSSGSSESS).

This sequence belongs to the protein kinase superfamily. Ser/Thr protein kinase family. In terms of assembly, interacts (via CBD domain) with clathrin. Interacts with AP-2 complex. Interacts with NUMB. Interacts with alpha-adaptin. Interacts with EPS15 isoform 2. Interacts with membrane-bound activated NOTCH1 but not with the inactive full-length form of NOTCH1. Preferentially interacts with monoubiquitinated activated NOTCH1 compared to the non-ubiquitinated form. In terms of processing, autophosphorylated.

The protein resides in the cell membrane. It is found in the membrane. Its subcellular location is the clathrin-coated pit. It localises to the presynapse. The enzyme catalyses L-seryl-[protein] + ATP = O-phospho-L-seryl-[protein] + ADP + H(+). It carries out the reaction L-threonyl-[protein] + ATP = O-phospho-L-threonyl-[protein] + ADP + H(+). With respect to regulation, stimulated by clathrin. Functionally, regulates clathrin-mediated endocytosis by phosphorylating the AP2M1/mu2 subunit of the adaptor protein complex 2 (AP-2) which ensures high affinity binding of AP-2 to cargo membrane proteins during the initial stages of endocytosis. Preferentially, may phosphorylate substrates on threonine residues. Regulates phosphorylation of other AP-2 subunits as well as AP-2 localization and AP-2-mediated internalization of ligand complexes. Phosphorylates NUMB and regulates its cellular localization, promoting NUMB localization to endosomes. Binds to and stabilizes the activated form of NOTCH1, increases its localization in endosomes and regulates its transcriptional activity. The polypeptide is AP2-associated protein kinase 1 (Aak1) (Mus musculus (Mouse)).